The following is a 304-amino-acid chain: Aspartate carbamoyltransferase catalytic subunit (304 aa).

2 residues coordinate carbamoyl phosphate: arginine 49 and threonine 50. Position 77 (lysine 77) interacts with L-aspartate. Residues arginine 99, histidine 127, and glutamine 130 each coordinate carbamoyl phosphate. Positions 160 and 211 each coordinate L-aspartate. Carbamoyl phosphate contacts are provided by alanine 250 and proline 251.

Belongs to the aspartate/ornithine carbamoyltransferase superfamily. ATCase family. As to quaternary structure, heterododecamer (2C3:3R2) of six catalytic PyrB chains organized as two trimers (C3), and six regulatory PyrI chains organized as three dimers (R2).

The catalysed reaction is carbamoyl phosphate + L-aspartate = N-carbamoyl-L-aspartate + phosphate + H(+). Its pathway is pyrimidine metabolism; UMP biosynthesis via de novo pathway; (S)-dihydroorotate from bicarbonate: step 2/3. Functionally, catalyzes the condensation of carbamoyl phosphate and aspartate to form carbamoyl aspartate and inorganic phosphate, the committed step in the de novo pyrimidine nucleotide biosynthesis pathway. The sequence is that of Aspartate carbamoyltransferase catalytic subunit from Bacillus velezensis (strain DSM 23117 / BGSC 10A6 / LMG 26770 / FZB42) (Bacillus amyloliquefaciens subsp. plantarum).